Reading from the N-terminus, the 563-residue chain is TSET complex member tstC (563 aa).

5 disordered regions span residues 146–170 (SPHQPPHYNTHHHTSTPSVAPSFIT), 192–213 (NSLSNSISNSNSNNNNNNNNDS), 235–298 (VLNS…NYNN), 376–395 (HPNAGKEAKEKEKEKENEFK), and 428–563 (GSAS…FLNF). A compositionally biased stretch (basic and acidic residues) spans 379–395 (AGKEAKEKEKEKENEFK). A compositionally biased stretch (low complexity) spans 428–459 (GSASSKSSPSTSPLSSSYNPSSPETSENSFSA). Residues 460 to 473 (TPISDSNSLKNSID) show a composition bias toward polar residues. Low complexity-rich tracts occupy residues 474–487 (NNNNNNNNNNNNNN) and 507–543 (NNSKSSLSTSNSNISTPDNGASSPLASSTSGSASSAA). The span at 552 to 563 (NSAKTKMNFLNF) shows a compositional bias: polar residues.

As to quaternary structure, component of the TSET complex, a heterohexamer composed of tstA, tstB, tstC, tstD, tstE and tstF, which may act in plasma membrane turnover. tstA, tstB, tstC and tstD are likely to be the core complex members with tstE and tstF acting as associated scaffold proteins.

This is TSET complex member tstC from Dictyostelium discoideum (Social amoeba).